Here is an 843-residue protein sequence, read N- to C-terminus: Protein P (843 aa).

Positions 1–177 are terminal protein domain (TP); it reads MPLSYQHFRK…FCGSPYSWEQ (177 aa). The spacer stretch occupies residues 178–346; the sequence is ELQHGRLVFQ…YCLSHIVNLL (169 aa). The interval 347–690 is polymerase/reverse transcriptase domain (RT); that stretch reads EDWGPCTEHG…YMNLYPVARQ (344 aa). The region spanning 357-600 is the Reverse transcriptase domain; sequence EHHIRIPRTP…YSLNFMGYVI (244 aa). Positions 429, 551, and 552 each coordinate Mg(2+).

This sequence belongs to the hepadnaviridae P protein family.

It catalyses the reaction DNA(n) + a 2'-deoxyribonucleoside 5'-triphosphate = DNA(n+1) + diphosphate. The enzyme catalyses Endonucleolytic cleavage to 5'-phosphomonoester.. Activated by host HSP70 and HSP40 in vitro to be able to bind the epsilon loop of the pgRNA. Because deletion of the RNase H region renders the protein partly chaperone-independent, the chaperones may be needed indirectly to relieve occlusion of the RNA-binding site by this domain. Inhibited by several reverse-transcriptase inhibitors: Lamivudine, Adefovir and Entecavir. Multifunctional enzyme that converts the viral RNA genome into dsDNA in viral cytoplasmic capsids. This enzyme displays a DNA polymerase activity that can copy either DNA or RNA templates, and a ribonuclease H (RNase H) activity that cleaves the RNA strand of RNA-DNA heteroduplexes in a partially processive 3'- to 5'-endonucleasic mode. Neo-synthesized pregenomic RNA (pgRNA) are encapsidated together with the P protein, and reverse-transcribed inside the nucleocapsid. Initiation of reverse-transcription occurs first by binding the epsilon loop on the pgRNA genome, and is initiated by protein priming, thereby the 5'-end of (-)DNA is covalently linked to P protein. Partial (+)DNA is synthesized from the (-)DNA template and generates the relaxed circular DNA (RC-DNA) genome. After budding and infection, the RC-DNA migrates in the nucleus, and is converted into a plasmid-like covalently closed circular DNA (cccDNA). The activity of P protein does not seem to be necessary for cccDNA generation, and is presumably released from (+)DNA by host nuclear DNA repair machinery. This Homo sapiens (Human) protein is Protein P.